Here is a 382-residue protein sequence, read N- to C-terminus: Anhydro-N-acetylmuramic acid kinase (382 aa).

9–16 serves as a coordination point for ATP; that stretch reads GTSLDGID.

It belongs to the anhydro-N-acetylmuramic acid kinase family.

It catalyses the reaction 1,6-anhydro-N-acetyl-beta-muramate + ATP + H2O = N-acetyl-D-muramate 6-phosphate + ADP + H(+). It functions in the pathway amino-sugar metabolism; 1,6-anhydro-N-acetylmuramate degradation. It participates in cell wall biogenesis; peptidoglycan recycling. Its function is as follows. Catalyzes the specific phosphorylation of 1,6-anhydro-N-acetylmuramic acid (anhMurNAc) with the simultaneous cleavage of the 1,6-anhydro ring, generating MurNAc-6-P. Is required for the utilization of anhMurNAc either imported from the medium or derived from its own cell wall murein, and thus plays a role in cell wall recycling. This is Anhydro-N-acetylmuramic acid kinase from Bacillus thuringiensis subsp. konkukian (strain 97-27).